Here is a 593-residue protein sequence, read N- to C-terminus: MSWLFGLNRGQPEPPGVPGFPEPPSPPGGSGDGGDKNRPKDKWSNFDPTGLERAAKAARELDQSRHAKEALNLAKVQEETLQMEQQAKIKEYEAAVEQIKNEQIRVQSEEKRKTLNEETKQHQARAQYQDKLARQRYEDQLRQQQLQNEENLRRQEESVQKQEAMRKATVEHEMELRHKNDMLRIEAEAHARAKVERENADIIREQIRLKAAEHRQTVLESIKTAGTVFGEGFRTFISDWDKVTATVAGLTLLAVGVYTAKNGTGVAGRYIEARLGKPSLVRDTSRITVVEAIKHPIKISKRIFSKIQDALEGVILSPRLEERVRDIAIATRNTKANKGLYRNILMYGPPGTGKTLFAKKLAMHSSMDYAIMTGGDVAPMGREGVTAMHKVFDWAGTSKRGLLLFVDEADAFLRKRSTEKISEDLRATLNAFLYRTGEQSNKFMLVLASNQPEQFDWAINDRIDEIVHFDLPGLEERERLVRLYFDKYVLQPASEGKQRLKVAQFDYGKKCSELATLTEGMSGREISKLGVAWQAAAYASEDGILTEAMIDARVADAIRQHQQKMEWLKAEGKESTKEIGKNPLQPLLEGTPV.

Disordered regions lie at residues 1 to 64 (MSWL…LDQS), 109 to 129 (EEKRKTLNEETKQHQARAQYQ), and 145 to 164 (QLQNEENLRRQEESVQKQEA). Residues 1 to 242 (MSWLFGLNRG…FRTFISDWDK (242 aa)) lie on the Mitochondrial intermembrane side of the membrane. The span at 12–27 (PEPPGVPGFPEPPSPP) shows a compositional bias: pro residues. Composition is skewed to basic and acidic residues over residues 33-44 (GGDKNRPKDKWS), 53-64 (RAAKAARELDQS), 109-121 (EEKRKTLNEETKQ), and 150-164 (ENLRRQEESVQKQEA). Residues 51–215 (LERAAKAARE…QIRLKAAEHR (165 aa)) are a coiled coil. Residues 243–260 (VTATVAGLTLLAVGVYTA) form a helical membrane-spanning segment. At 261-593 (KNGTGVAGRY…LQPLLEGTPV (333 aa)) the chain is on the mitochondrial matrix side. Residue 348 to 355 (GPPGTGKT) participates in ATP binding. A compositionally biased stretch (basic and acidic residues) spans 570–580 (AEGKESTKEIG). A disordered region spans residues 570 to 593 (AEGKESTKEIGKNPLQPLLEGTPV).

The protein belongs to the AAA ATPase family. In terms of assembly, can form homooligomers. Homodimer formation at the N-terminus may be regulated by ATP and is required for the interaction with the inner surface of the mitochondrial outer membrane and correct mitochondrial homeostasis.

It localises to the mitochondrion inner membrane. The protein localises to the mitochondrion matrix. It is found in the mitochondrion nucleoid. The catalysed reaction is ATP + H2O = ADP + phosphate + H(+). In terms of biological role, essential for mitochondrial network organization, mitochondrial metabolism and cell growth at organism and cellular level. May play an important role in mitochondrial protein synthesis. May also participate in mitochondrial DNA replication. May bind to mitochondrial DNA D-loops and contribute to nucleoid stability. Required for enhanced channeling of cholesterol for hormone-dependent steroidogenesis. Involved in mitochondrial-mediated antiviral innate immunity. Required to protect mitochondria from the PERK-mediated unfolded protein response: specifically inhibits the activity of EIF2AK3/PERK at mitochondria-endoplasmic reticulum contact sites, thereby providing a safe haven for mitochondrial protein translation during endoplasmic reticulum stress. Ability to inhibit EIF2AK3/PERK is independent of its ATPase activity. Also involved in the mitochondrial DNA damage response by promoting signaling between damaged genomes and the mitochondrial membrane, leading to activation of the integrated stress response (ISR). The polypeptide is ATPase family AAA domain-containing protein 3-B (atad3-b) (Xenopus laevis (African clawed frog)).